Reading from the N-terminus, the 417-residue chain is Cobalamin binding intrinsic factor (417 aa).

Positions 1 to 18 are cleaved as a signal peptide; the sequence is MAWLSFYLLNVLWAVAGT. 3 disulfides stabilise this stretch: Cys-26–Cys-246, Cys-103–Cys-288, and Cys-143–Cys-182. Asp-171 contacts cob(II)alamin. Ser-191 is subject to Phosphoserine. An N-linked (GlcNAc...) asparagine glycan is attached at Asn-209. 2 residues coordinate cob(II)alamin: Asp-222 and Gln-270. N-linked (GlcNAc...) asparagine glycosylation is found at Asn-311 and Asn-330. Residues 365-370 and 386-395 each bind cob(II)alamin; these read SWGLIV and WEFLSGKTPL. An N-linked (GlcNAc...) asparagine glycan is attached at Asn-413.

Belongs to the eukaryotic cobalamin transport proteins family. As to quaternary structure, interacts with CUBN (via CUB domains). The N-terminus is blocked. Gastric mucosa.

Its subcellular location is the secreted. In terms of biological role, promotes absorption of the essential vitamin cobalamin (Cbl) in the ileum. After interaction with CUBN, the CBLIF-cobalamin complex is internalized via receptor-mediated endocytosis. This Rattus norvegicus (Rat) protein is Cobalamin binding intrinsic factor.